The following is a 1191-amino-acid chain: Laminin subunit gamma-2 (1191 aa).

An N-terminal signal peptide occupies residues 1–21 (MPALWLSCCLGVALLLPAAQA). 12 cysteine pairs are disulfide-bonded: C28-C37, C30-C53, C56-C65, C68-C81, C84-C96, C86-C102, C104-C113, C116-C128, C139-C150, C141-C155, C157-C166, and C169-C184. 3 Laminin EGF-like domains span residues 28 to 83 (CDCN…RCLP), 84 to 130 (CNCH…GCTR), and 139 to 186 (CDCD…GCTQ). Residues 187-196 (CFCYGHSASC) enclose the Laminin EGF-like 4; first part domain. The Laminin IV type A domain occupies 213–381 (QDVDGWKAVQ…SGAPAPWVER (169 aa)). 2 N-linked (GlcNAc...) asparagine glycosylation sites follow: N342 and N362. Residues 382–415 (CVCPAGYKGQFCQECASGYKRDSARLGPFGACVP) enclose the Laminin EGF-like 4; second part domain. Laminin EGF-like domains lie at 416–461 (CNCQ…SCKP), 462–516 (CPCH…PCQR), and 517–572 (CQCN…KCRA). 11 cysteine pairs are disulfide-bonded: C462/C470, C464/C481, C484/C493, C496/C514, C517/C531, C519/C538, C541/C550, C553/C570, C573/C585, C575/C591, and C593/C602. N526 carries N-linked (GlcNAc...) asparagine glycosylation. One can recognise a Laminin EGF-like 8; truncated domain in the interval 573 to 602 (CNCSPMGSEPGECRGDGSCVCKPGFGGLNC). The Cell attachment site motif lies at 586–588 (RGD). Residues 603–1191 (DHAALTSCPA…CYNTQALEQQ (589 aa)) are domain II and I. Coiled-coil stretches lie at residues 612–710 (ACYN…IRAL) and 759–786 (LAQE…ETED). S805 carries an O-linked (Xyl...) (chondroitin sulfate) serine glycan. N941 carries an N-linked (GlcNAc...) asparagine glycan. A coiled-coil region spans residues 946 to 996 (EVENILKNLREFDLQVEDRKAEAEEAMKRLSSISQKVADASDKTQQAETAL). N1032 is a glycosylation site (N-linked (GlcNAc...) asparagine). Positions 1139–1178 (LMSDLEERVRRQRNHLHLLETSIDGILADVKNLENIRDNL) form a coiled coil.

As to quaternary structure, laminin is a complex glycoprotein, consisting of three different polypeptide chains (alpha, beta, gamma), which are bound to each other by disulfide bonds into a cross-shaped molecule comprising one long and three short arms with globules at each end. Gamma-2 is a subunit of laminin-5 (laminin-332 or epiligrin/kalinin/nicein). Binds to fibulin-1, fibulin-1c, fibulin-2 and nidogen. O-glycosylated; contains chondroitin sulfate (CS). Epithelial cells of many tissues, particularly high levels in tongue, hair follicles and kidney. Basement membranes of the collecting tubules of kidney and pancreas.

Its subcellular location is the secreted. The protein localises to the extracellular space. The protein resides in the extracellular matrix. It is found in the basement membrane. In terms of biological role, binding to cells via a high affinity receptor, laminin is thought to mediate the attachment, migration and organization of cells into tissues during embryonic development by interacting with other extracellular matrix components. The sequence is that of Laminin subunit gamma-2 (Lamc2) from Mus musculus (Mouse).